The sequence spans 99 residues: SAGA-associated factor 11 (99 aa).

Residues 71–92 (FYCENCGREVSGNRFAAHLQRC) form an SGF11-type zinc finger.

Belongs to the SGF11 family. As to quaternary structure, component of the 1.8 MDa SAGA transcription coactivator-HAT complex. SAGA is built of 5 distinct domains with specialized functions. Within the SAGA complex, SUS1, SGF11, SGF73 and UBP8 form an additional subcomplex of SAGA called the DUB module (deubiquitination module). Interacts directly with SGF73, SUS1 and UBP8.

The protein resides in the nucleus. Functionally, functions as a component of the transcription regulatory histone acetylation (HAT) complex SAGA. At the promoters, SAGA is required for recruitment of the basal transcription machinery. It influences RNA polymerase II transcriptional activity through different activities such as TBP interaction and promoter selectivity, interaction with transcription activators, and chromatin modification through histone acetylation and deubiquitination. SAGA acetylates nucleosomal histone H3 to some extent (to form H3K9ac, H3K14ac, H3K18ac and H3K23ac). SAGA interacts with DNA via upstream activating sequences (UASs). Involved in transcriptional regulation of a subset of SAGA-regulated genes. Within the SAGA complex, participates in a subcomplex, that specifically deubiquitinates histones H2B. The polypeptide is SAGA-associated factor 11 (Candida glabrata (strain ATCC 2001 / BCRC 20586 / JCM 3761 / NBRC 0622 / NRRL Y-65 / CBS 138) (Yeast)).